The sequence spans 213 residues: Orotidine 5'-phosphate decarboxylase (213 aa).

Substrate is bound by residues Asp-11, Lys-33, 61-70 (DLKLADIPNT), Ser-113, 166-176 (PGVGAQGGKAS), Gly-189, and Arg-190. The Proton donor role is filled by Lys-63.

This sequence belongs to the OMP decarboxylase family. Type 1 subfamily. In terms of assembly, homodimer.

It carries out the reaction orotidine 5'-phosphate + H(+) = UMP + CO2. It participates in pyrimidine metabolism; UMP biosynthesis via de novo pathway; UMP from orotate: step 2/2. Its function is as follows. Catalyzes the decarboxylation of orotidine 5'-monophosphate (OMP) to uridine 5'-monophosphate (UMP). In Thermococcus kodakarensis (strain ATCC BAA-918 / JCM 12380 / KOD1) (Pyrococcus kodakaraensis (strain KOD1)), this protein is Orotidine 5'-phosphate decarboxylase.